A 443-amino-acid chain; its full sequence is MQVTVEATGELERRLTITLPGSDFESKVQERLRSMVPRIKMDGFRPGKVPYKVVERRYGSAVRQEVSDEFVRDSFRDAIKQESLRPAGMPQIEPPQLEAGESFAYTVTFEVLPEIESVKLEGIKIKQPRAEVTDKDIEGVLKKLQEQHIEWEPMERPAQEADGVTITYHGSIEGKPFPGGSKENFFVILGKGTTLKEFEEHLIGVNKGQELTFEITFPEHYGNQELAGKKASFAVKVISVTAPRLPEINEDFAEKLGVKEGGVAALRQEIKASMTRNLEQAVRDRVREQIMDGLLVANPTTLPISLVKEETSILLEQAKNNLAKQGVNPQEISLDESPFVEQARRRVALRLIFSTILEKQEIKADQDKIKQRVTELAASYEDPEEFSRWIFSDRERLSEIENAVMETQIIDWVLDQVEVLDKSMSFEEVVNPQISSAKEKVQD.

The PPIase FKBP-type domain maps to 161-246; it reads ADGVTITYHG…VISVTAPRLP (86 aa).

Belongs to the FKBP-type PPIase family. Tig subfamily.

The protein resides in the cytoplasm. It catalyses the reaction [protein]-peptidylproline (omega=180) = [protein]-peptidylproline (omega=0). Functionally, involved in protein export. Acts as a chaperone by maintaining the newly synthesized protein in an open conformation. Functions as a peptidyl-prolyl cis-trans isomerase. This chain is Trigger factor, found in Nitrosococcus oceani (strain ATCC 19707 / BCRC 17464 / JCM 30415 / NCIMB 11848 / C-107).